We begin with the raw amino-acid sequence, 683 residues long: Elongation factor G 2 (683 aa).

In terms of domain architecture, tr-type G spans 4-279 (QQMRNIGIMA…AVVEYLPAPQ (276 aa)). GTP contacts are provided by residues 13-20 (AHVDAGKT), 77-81 (DTPGH), and 131-134 (NKMD).

It belongs to the TRAFAC class translation factor GTPase superfamily. Classic translation factor GTPase family. EF-G/EF-2 subfamily.

Its subcellular location is the cytoplasm. Catalyzes the GTP-dependent ribosomal translocation step during translation elongation. During this step, the ribosome changes from the pre-translocational (PRE) to the post-translocational (POST) state as the newly formed A-site-bound peptidyl-tRNA and P-site-bound deacylated tRNA move to the P and E sites, respectively. Catalyzes the coordinated movement of the two tRNA molecules, the mRNA and conformational changes in the ribosome. The protein is Elongation factor G 2 (fusB) of Treponema pallidum (strain Nichols).